A 109-amino-acid chain; its full sequence is Cell division suppressor protein YneA (109 aa).

In terms of domain architecture, LysM spans 40-94 (STVTITKGDTLWELSNKYHNHHHLTTNEFVKWVEDVNDLNSDTAQSLSPGDKLYI).

This sequence belongs to the YneA family.

Its subcellular location is the cytoplasm. Inhibits cell division during the SOS response. Affects a later stage of the cell division protein assembly, after the assembly of the Z ring, by probably suppressing recruitment of FtsL and/or DivIC to the division machinery. The polypeptide is Cell division suppressor protein YneA (Priestia megaterium (strain DSM 319 / IMG 1521) (Bacillus megaterium)).